The following is a 305-amino-acid chain: Small ribosomal subunit protein uS3 (305 aa).

One can recognise a KH type-2 domain in the interval 17 to 86; the sequence is IDEFFSEELS…DPQVDVQEVD (70 aa). Composition is skewed to acidic residues over residues 207 to 262 and 272 to 305; these read EPEG…EAET and AAEE…EEET. Residues 207-305 form a disordered region; sequence EPEGDVEELL…EDETTDEEET (99 aa).

Belongs to the universal ribosomal protein uS3 family. As to quaternary structure, part of the 30S ribosomal subunit.

Functionally, binds the lower part of the 30S subunit head. The polypeptide is Small ribosomal subunit protein uS3 (Natronomonas pharaonis (strain ATCC 35678 / DSM 2160 / CIP 103997 / JCM 8858 / NBRC 14720 / NCIMB 2260 / Gabara) (Halobacterium pharaonis)).